Consider the following 179-residue polypeptide: Protein TIFY 11a (179 aa).

Residues 62 to 97 enclose the Tify domain; it reads VDGGGQQFTIFYAGKVVVIDRCTPAMAAELMRFASA. The Jas motif lies at 115-140; the sequence is PIARKASLKRFLAKRKATPASARSSY. The short motif at 117–124 is the Nuclear localization signal element; the sequence is ARKASLKR.

This sequence belongs to the TIFY/JAZ family. As to quaternary structure, interacts with BHLH148. Interacts with COI1A in a coronatine-dependent manner. Interacts with COI1B in a coronatine-dependent manner. Coronatine is an analog of jasmonoyl isoleucine (JA-Ile). Interacts with RSS3. Forms a ternary complex with RSS3 and BHLH094 in the nucleus. Interacts with BHLH062 and NINJA1. Interacts with MYB30. Post-translationally, ubiquitinated. Targeted for degradation by the SCF(COI1) E3 ubiquitin ligase-proteasome pathway during jasmonate signaling.

The protein localises to the nucleus. Functionally, repressor of jasmonate (JA) responses. Forms a ternary complex with RSS3 and BHLH94 to negatively regulate JA-responsive genes. Acts as a positive regulator of tolerance to salt stress. Involved in salt tolerance by modulating potassium homeostasis through JA signaling and regulation of the expression of potassium ion transporter genes. Acts as a transcriptional regulator targeted by the SCF(COI1) E3 ubiquitin ligase complexes in the JA signaling pathway, and interacts with BHLH062 that may directly regulate the ion transporter genes. Acts as a positive regulator of tolerance to dehydration stress. Acts as a negative regulator of tolerance to cold stress by interacting with MYB30. The sequence is that of Protein TIFY 11a from Oryza sativa subsp. japonica (Rice).